A 218-amino-acid chain; its full sequence is ATP-dependent Clp protease proteolytic subunit 2 (218 aa).

The Nucleophile role is filled by serine 114. Histidine 139 is an active-site residue.

Belongs to the peptidase S14 family. In terms of assembly, fourteen ClpP subunits assemble into 2 heptameric rings which stack back to back to give a disk-like structure with a central cavity, resembling the structure of eukaryotic proteasomes.

The protein localises to the cytoplasm. It carries out the reaction Hydrolysis of proteins to small peptides in the presence of ATP and magnesium. alpha-casein is the usual test substrate. In the absence of ATP, only oligopeptides shorter than five residues are hydrolyzed (such as succinyl-Leu-Tyr-|-NHMec, and Leu-Tyr-Leu-|-Tyr-Trp, in which cleavage of the -Tyr-|-Leu- and -Tyr-|-Trp bonds also occurs).. Its function is as follows. Cleaves peptides in various proteins in a process that requires ATP hydrolysis. Has a chymotrypsin-like activity. Plays a major role in the degradation of misfolded proteins. Probably partially responsible for degradation of ECF sigma factor SigR prime. The chain is ATP-dependent Clp protease proteolytic subunit 2 from Streptomyces coelicolor (strain ATCC BAA-471 / A3(2) / M145).